The sequence spans 37 residues: Large ribosomal subunit protein bL36 (37 aa).

It belongs to the bacterial ribosomal protein bL36 family.

This is Large ribosomal subunit protein bL36 from Caldicellulosiruptor saccharolyticus (strain ATCC 43494 / DSM 8903 / Tp8T 6331).